We begin with the raw amino-acid sequence, 120 residues long: MADNIDLELSLQTNHSMIINKRLTQSDVDYNNRLHLPKREFEQFILPEMEWELVMNLRNSVEVIVKDVNGNEYHVTLVKYQNGHYYFMGKWMDIVRAKGYKRDDEISLLWDKSNEVFYII.

A DNA-binding region (TF-B3) is located at residues 19 to 120 (INKRLTQSDV…DKSNEVFYII (102 aa)).

Its subcellular location is the nucleus. This chain is Putative B3 domain-containing protein At3g28853, found in Arabidopsis thaliana (Mouse-ear cress).